Here is a 374-residue protein sequence, read N- to C-terminus: tRNA-specific 2-thiouridylase MnmA (374 aa).

Residues 15 to 22 (GMSGGVDS) and Met-41 contribute to the ATP site. An interaction with target base in tRNA region spans residues 101–103 (NPD). Catalysis depends on Cys-106, which acts as the Nucleophile. The cysteines at positions 106 and 203 are disulfide-linked. Gly-130 lines the ATP pocket. The tract at residues 153 to 155 (KDQ) is interaction with tRNA. Cys-203 (cysteine persulfide intermediate) is an active-site residue. Residues 311-312 (RY) are interaction with tRNA.

This sequence belongs to the MnmA/TRMU family.

The protein localises to the cytoplasm. The catalysed reaction is S-sulfanyl-L-cysteinyl-[protein] + uridine(34) in tRNA + AH2 + ATP = 2-thiouridine(34) in tRNA + L-cysteinyl-[protein] + A + AMP + diphosphate + H(+). In terms of biological role, catalyzes the 2-thiolation of uridine at the wobble position (U34) of tRNA, leading to the formation of s(2)U34. This Lysinibacillus sphaericus (strain C3-41) protein is tRNA-specific 2-thiouridylase MnmA.